A 215-amino-acid chain; its full sequence is Sperm acrosome membrane-associated protein 3 (215 aa).

Topologically, residues Met1 to Arg63 are cytoplasmic. A helical; Signal-anchor for type II membrane protein transmembrane segment spans residues Trp64–Ser84. Topologically, residues Ser85–Phe215 are extracellular. Residues Lys88–Phe215 enclose the C-type lysozyme domain. Intrachain disulfides connect Cys93-Cys213, Cys117-Cys201, Cys151-Cys166, and Cys162-Cys180.

Belongs to the glycosyl hydrolase 22 family. As to quaternary structure, interacts with ASTL. Post-translationally, the processed form derives from the membrane form by proteolytic processing. As to expression, the processed form is expressed in sperm (at protein level). Expressed in testis, epididymis and placenta.

It localises to the cytoplasmic vesicle. It is found in the secretory vesicle. The protein resides in the acrosome membrane. Its subcellular location is the secreted. Its function is as follows. Sperm surface membrane protein that may be involved in sperm-egg plasma membrane adhesion and fusion during fertilization. It could be a potential receptor for the egg oligosaccharide residue N-acetylglucosamine, which is present in the extracellular matrix over the egg plasma membrane. The processed form has no detectable bacteriolytic activity in vitro. The protein is Sperm acrosome membrane-associated protein 3 (SPACA3) of Homo sapiens (Human).